A 70-amino-acid chain; its full sequence is Brevinin-ALb (70 aa).

A signal peptide spans 1 to 22; the sequence is MFTLKKSLLLLFFLGTINLSLC. Residues 23–46 constitute a propeptide that is removed on maturation; it reads EQERDADEEERRDDDEMDVEVEKR. Residues Cys-64 and Cys-70 are joined by a disulfide bond.

Expressed by the skin glands.

The protein resides in the secreted. In terms of biological role, antimicrobial peptide with activity against Gram-positive and Gram-negative bacteria and against fungi. Has been tested against S.aureus (MIC=5.5 ug/mL), E.coli (MIC=6.5 ug/mL), B.dysenteriae (MIC=2.2 ug/mL), and C.albicans (MIC=7.5 ug/mL). Can regulate or mediate antimicrobial response by stimulating mast cell degranulation. Induces histamine release. Shows cytotoxicity toward solid tumor cell line HepG2. Also shows a potent hemolytic activity (LD(50)=5 ug/ml). The sequence is that of Brevinin-ALb from Amolops loloensis (Lolokou Sucker Frog).